A 327-amino-acid polypeptide reads, in one-letter code: L-lactate dehydrogenase (327 aa).

Residues Val-18, Asp-39, Lys-44, Tyr-69, and 83–84 (GA) each bind NAD(+). Residues Gln-86, Arg-92, and 124 to 127 (NPVD) contribute to the substrate site. NAD(+) is bound by residues 122–124 (AAN) and Ser-147. A substrate-binding site is contributed by 152–155 (DSAR). Beta-D-fructose 1,6-bisphosphate is bound by residues Arg-157 and His-172. His-179 serves as the catalytic Proton acceptor. Tyr-224 is modified (phosphotyrosine). Thr-233 contributes to the substrate binding site.

The protein belongs to the LDH/MDH superfamily. LDH family. As to quaternary structure, homotetramer.

It localises to the cytoplasm. The catalysed reaction is (S)-lactate + NAD(+) = pyruvate + NADH + H(+). The protein operates within fermentation; pyruvate fermentation to lactate; (S)-lactate from pyruvate: step 1/1. With respect to regulation, allosterically activated by fructose 1,6-bisphosphate (FBP). Functionally, catalyzes the conversion of lactate to pyruvate. This Streptococcus uberis (strain ATCC BAA-854 / 0140J) protein is L-lactate dehydrogenase.